We begin with the raw amino-acid sequence, 248 residues long: Isoprenyl transferase (248 aa).

Asp23 is a catalytic residue. Asp23 provides a ligand contact to Mg(2+). Substrate-binding positions include 24 to 27 (GNGR), Trp28, Arg36, His40, and 68 to 70 (STE). The Proton acceptor role is filled by Asn71. Substrate is bound by residues Trp72, Arg74, Arg185, and 191–193 (RIS). Glu204 contacts Mg(2+).

This sequence belongs to the UPP synthase family. As to quaternary structure, homodimer. Mg(2+) is required as a cofactor.

Its function is as follows. Catalyzes the condensation of isopentenyl diphosphate (IPP) with allylic pyrophosphates generating different type of terpenoids. This Neisseria meningitidis serogroup B (strain ATCC BAA-335 / MC58) protein is Isoprenyl transferase.